Reading from the N-terminus, the 324-residue chain is Brorin (324 aa).

The first 27 residues, 1–27 (MPSSSAMAVGALSSSLLVTCCLMVALC), serve as a signal peptide directing secretion. Residues 37-126 (AQAPEQPGQE…TPQGEPPAAA (90 aa)) are disordered. Basic and acidic residues-rich tracts occupy residues 44–56 (GQEK…RDSP) and 64–78 (RASR…DWKS). Positions 92-107 (KQKQAWAAQGGSAKAA) are enriched in low complexity. The Mediates cell adhesion motif lies at 114-116 (RGD). 2 consecutive VWFC domains span residues 152–211 (KGCV…PQCK) and 215–273 (NYCE…PICK).

As to quaternary structure, peripherally associated with AMPAR complex. AMPAR complex consists of an inner core made of 4 pore-forming GluA/GRIA proteins (GRIA1, GRIA2, GRIA3 and GRIA4) and 4 major auxiliary subunits arranged in a twofold symmetry. One of the two pairs of distinct binding sites is occupied either by CNIH2, CNIH3 or CACNG2, CACNG3. The other harbors CACNG2, CACNG3, CACNG4, CACNG8 or GSG1L. This inner core of AMPAR complex is complemented by outer core constituents binding directly to the GluA/GRIA proteins at sites distinct from the interaction sites of the inner core constituents. Outer core constituents include at least PRRT1, PRRT2, CKAMP44/SHISA9, FRRS1L and NRN1. The proteins of the inner and outer core serve as a platform for other, more peripherally associated AMPAR constituents, including VWC2. Alone or in combination, these auxiliary subunits control the gating and pharmacology of the AMPAR complex and profoundly impact their biogenesis and protein processing. As to expression, predominantly expressed in the brain (at protein level). It is expressed in the neurons but not the glial cells.

The protein localises to the secreted. Its subcellular location is the extracellular space. It is found in the extracellular matrix. The protein resides in the basement membrane. It localises to the synapse. Functionally, BMP antagonist which may play a role in neural development. Promotes cell adhesion. This chain is Brorin (Vwc2), found in Mus musculus (Mouse).